We begin with the raw amino-acid sequence, 145 residues long: Large ribosomal subunit protein uL15 (145 aa).

Residues 1 to 42 form a disordered region; sequence MELHTLKATPGSRKAKHRVGRGHAAGKGKQAGRGQSGQTKRS. Residues 13–26 show a composition bias toward basic residues; that stretch reads RKAKHRVGRGHAAG.

It belongs to the universal ribosomal protein uL15 family. Part of the 50S ribosomal subunit.

Its function is as follows. Binds to the 23S rRNA. The chain is Large ribosomal subunit protein uL15 from Metamycoplasma arthritidis (strain 158L3-1) (Mycoplasma arthritidis).